A 329-amino-acid polypeptide reads, in one-letter code: tRNA-modifying protein YgfZ (329 aa).

Folate is bound by residues Trp-27 and Trp-189.

This sequence belongs to the tRNA-modifying YgfZ family.

It is found in the cytoplasm. Functionally, folate-binding protein involved in regulating the level of ATP-DnaA and in the modification of some tRNAs. It is probably a key factor in regulatory networks that act via tRNA modification, such as initiation of chromosomal replication. The sequence is that of tRNA-modifying protein YgfZ from Cronobacter sakazakii (strain ATCC BAA-894) (Enterobacter sakazakii).